We begin with the raw amino-acid sequence, 140 residues long: Ribosome-binding factor A (140 aa).

The disordered stretch occupies residues 115–140 (EDERQQRGDIPPGSDQQPGSDEQPTG). Polar residues predominate over residues 128–140 (SDQQPGSDEQPTG).

The protein belongs to the RbfA family. Monomer. Binds 30S ribosomal subunits, but not 50S ribosomal subunits or 70S ribosomes.

The protein localises to the cytoplasm. One of several proteins that assist in the late maturation steps of the functional core of the 30S ribosomal subunit. Associates with free 30S ribosomal subunits (but not with 30S subunits that are part of 70S ribosomes or polysomes). Required for efficient processing of 16S rRNA. May interact with the 5'-terminal helix region of 16S rRNA. This chain is Ribosome-binding factor A, found in Synechococcus sp. (strain CC9605).